Reading from the N-terminus, the 130-residue chain is Small ribosomal subunit protein uS9 (130 aa).

It belongs to the universal ribosomal protein uS9 family.

This chain is Small ribosomal subunit protein uS9, found in Streptococcus equi subsp. zooepidemicus (strain H70).